A 114-amino-acid polypeptide reads, in one-letter code: DNA polymerase epsilon subunit C (114 aa).

The segment at 91-114 (PDAVAPATGEEEQPKRRGRKPAQE) is disordered.

In terms of assembly, heterotetramer. Consists of four subunits: POL2, DPB2, DPB3 and DPB4.

It localises to the nucleus. As accessory component of the DNA polymerase epsilon (DNA polymerase II) participates in chromosomal DNA replication. This Yarrowia lipolytica (strain CLIB 122 / E 150) (Yeast) protein is DNA polymerase epsilon subunit C (DPB3).